Here is a 135-residue protein sequence, read N- to C-terminus: MAKNSRSPWIAKNLQRLLNVGLIMLAAILVVFLVKETIHLGKVLFLSNQETSSYMLIEGIVIYFLYFEFIALIVKYFESGYHFPLRYFIYIGITAIIRLIIVDHENPIDTLIYSGSILVLVVTLYLANTERLKRE.

Transmembrane regions (helical) follow at residues 20-40 (VGLI…TIHL), 54-74 (YMLI…ALIV), 82-102 (HFPL…LIIV), and 107-127 (PIDT…LYLA).

It belongs to the PsiE family.

It localises to the cell inner membrane. The chain is Protein PsiE homolog from Yersinia pestis (strain Pestoides F).